The chain runs to 154 residues: Endoribonuclease YbeY (154 aa).

Zn(2+)-binding residues include His-118, His-122, and His-128.

The protein belongs to the endoribonuclease YbeY family. The cofactor is Zn(2+).

It localises to the cytoplasm. Single strand-specific metallo-endoribonuclease involved in late-stage 70S ribosome quality control and in maturation of the 3' terminus of the 16S rRNA. In Macrococcus caseolyticus (strain JCSC5402) (Macrococcoides caseolyticum), this protein is Endoribonuclease YbeY.